Reading from the N-terminus, the 65-residue chain is Large ribosomal subunit protein bL35 (65 aa).

Residues 1–22 form a disordered region; it reads MPKLKTKSGAAKRFKKTGKGGF.

The protein belongs to the bacterial ribosomal protein bL35 family.

This chain is Large ribosomal subunit protein bL35, found in Francisella philomiragia subsp. philomiragia (strain ATCC 25017 / CCUG 19701 / FSC 153 / O#319-036).